Consider the following 502-residue polypeptide: Cardiolipin synthase (502 aa).

3 consecutive transmembrane segments (helical) span residues 7-27 (VAILIVIVGVLLTLTHDYWGG), 29-49 (LLGIFSVLISCSVVFIAFVIS), and 59-79 (IAWLAVLGSFPFLGFLFYLLF). PLD phosphodiesterase domains are found at residues 237–264 (INFRNHRKIIVIDGGVGFVGGLNIGDEY) and 415–442 (EKGFLHSKVIVVDGELASIGTANMDMRS). Catalysis depends on residues His242, Lys244, Asp249, His420, Lys422, and Asp427.

This sequence belongs to the phospholipase D family. Cardiolipin synthase subfamily.

The protein localises to the cell membrane. It catalyses the reaction 2 a 1,2-diacyl-sn-glycero-3-phospho-(1'-sn-glycerol) = a cardiolipin + glycerol. In terms of biological role, catalyzes the reversible phosphatidyl group transfer from one phosphatidylglycerol molecule to another to form cardiolipin (CL) (diphosphatidylglycerol) and glycerol. The chain is Cardiolipin synthase (cls) from Geobacillus thermodenitrificans (strain NG80-2).